The primary structure comprises 244 residues: 5-oxoprolinase subunit A (244 aa).

This sequence belongs to the LamB/PxpA family. Forms a complex composed of PxpA, PxpB and PxpC.

It carries out the reaction 5-oxo-L-proline + ATP + 2 H2O = L-glutamate + ADP + phosphate + H(+). In terms of biological role, catalyzes the cleavage of 5-oxoproline to form L-glutamate coupled to the hydrolysis of ATP to ADP and inorganic phosphate. This is 5-oxoprolinase subunit A from Salmonella newport (strain SL254).